Consider the following 374-residue polypeptide: DNA replication and repair protein RecF (374 aa).

Position 34 to 41 (34 to 41) interacts with ATP; it reads GNNGSGKT.

This sequence belongs to the RecF family.

Its subcellular location is the cytoplasm. In terms of biological role, the RecF protein is involved in DNA metabolism; it is required for DNA replication and normal SOS inducibility. RecF binds preferentially to single-stranded, linear DNA. It also seems to bind ATP. The sequence is that of DNA replication and repair protein RecF from Allorhizobium ampelinum (strain ATCC BAA-846 / DSM 112012 / S4) (Agrobacterium vitis (strain S4)).